The following is a 146-amino-acid chain: Hemoglobin subunit beta (146 aa).

An N-acetylvaline modification is found at valine 1. A Globin domain is found at 2-146 (HLSAEEKAAV…VANALAHKYH (145 aa)). Residue threonine 12 is modified to Phosphothreonine. Phosphoserine is present on serine 44. Lysine 59 is modified (N6-acetyllysine). Histidine 63 is a heme b binding site. Lysine 82 bears the N6-acetyllysine mark. Histidine 92 provides a ligand contact to heme b. Residue cysteine 93 is modified to S-nitrosocysteine. N6-acetyllysine is present on lysine 144.

The protein belongs to the globin family. In terms of assembly, heterotetramer of two alpha chains and two beta chains. Red blood cells.

Its function is as follows. Involved in oxygen transport from the lung to the various peripheral tissues. This Ctenodactylus gundi (Northern gundi) protein is Hemoglobin subunit beta (HBB).